Here is a 129-residue protein sequence, read N- to C-terminus: Small ribosomal subunit protein uS11 (129 aa).

The protein belongs to the universal ribosomal protein uS11 family. As to quaternary structure, part of the 30S ribosomal subunit. Interacts with proteins S7 and S18. Binds to IF-3.

Functionally, located on the platform of the 30S subunit, it bridges several disparate RNA helices of the 16S rRNA. Forms part of the Shine-Dalgarno cleft in the 70S ribosome. The polypeptide is Small ribosomal subunit protein uS11 (Pectobacterium atrosepticum (strain SCRI 1043 / ATCC BAA-672) (Erwinia carotovora subsp. atroseptica)).